Here is a 279-residue protein sequence, read N- to C-terminus: Ribosomal RNA small subunit methyltransferase J (279 aa).

S-adenosyl-L-methionine contacts are provided by residues 138–139 (ER) and D194.

The protein belongs to the methyltransferase superfamily. RsmJ family.

Its subcellular location is the cytoplasm. It catalyses the reaction guanosine(1516) in 16S rRNA + S-adenosyl-L-methionine = N(2)-methylguanosine(1516) in 16S rRNA + S-adenosyl-L-homocysteine + H(+). Its function is as follows. Specifically methylates the guanosine in position 1516 of 16S rRNA. The sequence is that of Ribosomal RNA small subunit methyltransferase J from Acinetobacter baumannii (strain ACICU).